Reading from the N-terminus, the 343-residue chain is Uroporphyrinogen decarboxylase (343 aa).

Substrate-binding positions include R25–R29, D75, Y152, S207, and H323.

The protein belongs to the uroporphyrinogen decarboxylase family. In terms of assembly, homodimer.

The protein resides in the cytoplasm. The catalysed reaction is uroporphyrinogen III + 4 H(+) = coproporphyrinogen III + 4 CO2. It participates in porphyrin-containing compound metabolism; protoporphyrin-IX biosynthesis; coproporphyrinogen-III from 5-aminolevulinate: step 4/4. Its function is as follows. Catalyzes the decarboxylation of four acetate groups of uroporphyrinogen-III to yield coproporphyrinogen-III. The polypeptide is Uroporphyrinogen decarboxylase (Jannaschia sp. (strain CCS1)).